Consider the following 383-residue polypeptide: WD repeat-containing protein 55 (383 aa).

Residues 1-11 show a composition bias toward basic and acidic residues; the sequence is MDRTCEERPAE. The disordered stretch occupies residues 1–33; sequence MDRTCEERPAEDGSDEEDPDSMEAPTRIRDTPE. Residues 12-21 show a composition bias toward acidic residues; that stretch reads DGSDEEDPDS. Ser14 bears the Phosphoserine mark. WD repeat units lie at residues 36–75, 82–121, 125–163, 166–205, 208–247, 250–289, and 293–332; these read VLEAPASGLAFHPARDLLAAGDVDGDVFVFSYSCQEGETK, HHLKACRAVAFSEDGQKLITVSKDKAIHVLDVEQGQLERR, AHGAPINSLLLVDENVLATGDDTGGICLWDQRKEGPLMD, QHEEYIADMALDPAKKLLLTASGDGCLGIFNIKRRRFELL, PQSGDLTSVTLMKWGKKVACGSSEGTIYLFNWNGFGATSD, ALRAESIDCMVPVTESLLCTGSTDGVIRAVNILPNRVVGS, and HTGEPVEELALSHCGRFLASSGHDQRLKFWDMAQLRAVVV. Ser354 bears the Phosphoserine mark. A disordered region spans residues 363-383; the sequence is REEGEDSMAQEEKEETGDDSD. Positions 365 to 383 are enriched in acidic residues; that stretch reads EGEDSMAQEEKEETGDDSD. Phosphothreonine is present on Thr378. Ser382 carries the post-translational modification Phosphoserine.

Belongs to the WD repeat WDR55 family.

The protein resides in the nucleus. It is found in the nucleolus. Its subcellular location is the cytoplasm. Its function is as follows. Nucleolar protein that acts as a modulator of rRNA synthesis. Plays a central role during organogenesis. In Homo sapiens (Human), this protein is WD repeat-containing protein 55 (WDR55).